The chain runs to 792 residues: LPS-assembly protein LptD (792 aa).

The first 22 residues, 1–22 (MYRVLRLLPLPLSVAISLSALA), serve as a signal peptide directing secretion.

This sequence belongs to the LptD family. In terms of assembly, component of the lipopolysaccharide transport and assembly complex. Interacts with LptE and LptA.

Its subcellular location is the cell outer membrane. Functionally, together with LptE, is involved in the assembly of lipopolysaccharide (LPS) at the surface of the outer membrane. The sequence is that of LPS-assembly protein LptD from Xylella fastidiosa (strain Temecula1 / ATCC 700964).